Reading from the N-terminus, the 162-residue chain is AP-1 complex subunit sigma-2 (162 aa).

Belongs to the adaptor complexes small subunit family. Adaptor protein complex 1 (AP-1) is a heterotetramer composed of two large adaptins (gamma-type subunit and beta-type subunit), a medium adaptin (mu-type subunit) and a small adaptin (sigma-type subunit). As to expression, expressed in roots, stems, leaves, flowers and siliques (developing fruits and seeds).

The protein localises to the golgi apparatus. It localises to the cytoplasmic vesicle. The protein resides in the clathrin-coated vesicle membrane. Functionally, subunit of clathrin-associated adaptor protein complex 1 that plays a role in protein sorting at the trans-Golgi network and early endosomes (TGN/EE). The AP complexes mediate the recruitment of clathrin to membranes and the recognition of sorting signals within the cytosolic tails of transmembrane cargo molecules. The sequence is that of AP-1 complex subunit sigma-2 (AAP19-2) from Arabidopsis thaliana (Mouse-ear cress).